The sequence spans 386 residues: Zinc finger protein 385A (386 aa).

The Matrin-type 1 zinc-finger motif lies at 74–98 (ISCNVCQIRFNSQSQAEAHYKGNRH). Positions 88-193 (QAEAHYKGNR…ASLPGGSKEE (106 aa)) are disordered. Positions 103–121 (KGIEAAKTRGREPSVRESG) are enriched in basic and acidic residues. Residues 145–351 (NGLGPAPGSP…AGSPLSLRPA (207 aa)) form a necessary for binding to ITPR1, CEBPA and p53/TP53 mRNAs region. A Phosphoserine modification is found at S185. A Matrin-type 2 zinc finger spans residues 201 to 225 (LYCALCKVAVNSLSQLEAHNKGTKH). The residue at position 248 (T248) is a Phosphothreonine. The Matrin-type 3 zinc-finger motif lies at 261 to 285 (FHCEICNVKVNSEVQLKQHISSRRH). Residues 279 to 305 (HISSRRHRDGVAGKPNPLLSRHKKPRG) form a disordered region.

As to quaternary structure, interacts with p53/TP53; the interaction is direct and enhances p53/TP53 transactivation functions on cell-cycle arrest target genes, resulting in growth arrest. Interacts with ELAVL1; the interaction is indirect, mRNA-dependent and may regulate p53/TP53 expression. Post-translationally, ubiquitinated upon prolonged exposure to genotoxic stress, which leads to proteasomal degradation of ZNF385A and releases p53/TP53 from cell-cycle arrest target gene promoters. As to expression, expressed in brain and testis (at protein level). In brain, the expression is located to olfactory bulb, cerebral cortex, hippocampus, satellite cells and Purkinje cells of the cerebellum molecular layer. Detected in bone marrow, white and brown adipose tissue, lung and at lower levels in the thymus.

The protein localises to the cytoplasm. The protein resides in the nucleus. It is found in the nucleolus. Its subcellular location is the cell projection. It localises to the dendrite. Its function is as follows. RNA-binding protein that affects the localization and the translation of a subset of mRNA. May play a role in adipogenesis through binding to the 3'-UTR of CEBPA mRNA and regulation of its translation. Targets ITPR1 mRNA to dendrites in Purkinje cells, and may regulate its activity-dependent translation. With ELAVL1, binds the 3'-UTR of p53/TP53 mRNAs to control their nuclear export induced by CDKN2A. Hence, may regulate p53/TP53 expression and mediate in part the CDKN2A anti-proliferative activity. May also bind CCNB1 mRNA. Alternatively, may also regulate p53/TP53 activity through direct protein-protein interaction. Interacts with p53/TP53 and promotes cell-cycle arrest over apoptosis enhancing preferentially the DNA binding and transactivation of p53/TP53 on cell-cycle arrest target genes over proapoptotic target genes. May also regulate the ubiquitination and stability of CDKN1A promoting DNA damage-induced cell cycle arrest. Also plays a role in megakaryocytes differentiation. This is Zinc finger protein 385A (Znf385a) from Mus musculus (Mouse).